Consider the following 257-residue polypeptide: Regulator of G-protein signaling 7-binding protein (257 aa).

Disordered regions lie at residues 1–45 and 174–196; these read MSSA…SAHK and ETPA…WQVS. Over residues 32–45 the composition is skewed to basic and acidic residues; the sequence is DWERRGSGSESAHK. Residues 180–192 show a composition bias toward low complexity; the sequence is DSSSSPVDSQQHS. A Nuclear localization signal motif is present at residues 242 to 247; that stretch reads RRRKRR. S-palmitoyl cysteine attachment occurs at residues cysteine 252 and cysteine 253.

The protein belongs to the RGS7BP/RGS9BP family. Interacts with 'R7' family proteins RGS6, RGS7, RGS9 and RGS11. Component of some R7-Gbeta5 complex composed of some R7 protein (RGS6, RGS7, RGS9 or RGS11), Gbeta5 (GNB5) and RGS7BP. Palmitoylated. Undergoes rapid palmitoylation turnover. De novo and turnover palmitoylation are both mediated by ZDHHC2. Palmitoylation regulates the cell membrane and nuclear shuttling and the regulation of GPCR signaling. Upon depalmitoylation, it is targeted from the plasma membrane into the nucleus. GPCR signaling inhibits depalmitoylation and promotes localization to the plasma membrane.

It is found in the nucleus. The protein localises to the cytoplasm. Its subcellular location is the cell membrane. Its function is as follows. Regulator of G protein-coupled receptor (GPCR) signaling. Regulatory subunit of the R7-Gbeta5 complexes that acts by controlling the subcellular location of the R7-Gbeta5 complexes. When palmitoylated, it targets the R7-Gbeta5 complexes to the plasma membrane, leading to inhibit G protein alpha subunits. When it is unpalmitoylated, the R7-Gbeta5 complexes undergo a nuclear/cytoplasmic shuttling. May also act by controlling the proteolytic stability of R7 proteins, probably by protecting them from degradation. The polypeptide is Regulator of G-protein signaling 7-binding protein (RGS7BP) (Homo sapiens (Human)).